A 622-amino-acid chain; its full sequence is Leucine-rich repeat and immunoglobulin-like domain-containing nogo receptor-interacting protein 1-B (622 aa).

The signal sequence occupies residues 1 to 43; it reads MTFLQVTIKMVAREASGHSYLVACWQPILILMLGTVLSGSATG. Cystine bridges form between C44–C50 and C48–C59. The region spanning 44-73 is the LRRNT domain; it reads CPSRCECSAQERSVVCHRRKLITLPEGIPI. Residues 44-563 lie on the Extracellular side of the membrane; sequence CPSRCECSAQ…FDMKTLIIAT (520 aa). LRR repeat units lie at residues 74–95, 98–119, 122–143, 146–167, 170–191, 194–215, 218–239, 266–287, 290–311, 314–335, and 338–359; these read DTRL…EFLN, QLED…AFSN, GLRT…VFTG, NLTR…MFQE, NLKE…AFHG, SLEQ…AFSH, NLLT…SFRR, NITT…AIQH, YLRF…KMHN, RLQA…SFKG, and YLRV…AFHS. N-linked (GlcNAc...) asparagine glycosylation is present at N146. N-linked (GlcNAc...) asparagine glycosylation is present at N204. 3 N-linked (GlcNAc...) asparagine glycosylation sites follow: N266, N276, and N295. N343 carries N-linked (GlcNAc...) asparagine glycosylation. The region spanning 371–425 is the LRRCT domain; it reads NPLACDCRLLWVFRRRWRLNFNRQQPSCETPEFLQGKEFKDFPDVLPPNYFTCQK. 3 cysteine pairs are disulfide-bonded: C375/C398, C377/C423, and C448/C499. Positions 413–515 constitute an Ig-like C2-type domain; sequence PDVLPPNYFT…GNDTRLAHLH (103 aa). N-linked (GlcNAc...) asparagine glycans are attached at residues N494, N507, N528, and N544. A helical membrane pass occupies residues 564-584; it reads TMGFISFLGVVLFCLVLLFLW. Over 585–622 the chain is Cytoplasmic; sequence SRGKGNAKPNIEIEYVPRKVDGENSPNEGSHKISMKMI.

It localises to the cell membrane. In terms of biological role, may play a role in regulating axonal regeneration and plasticity in the adult central nervous system. In Danio rerio (Zebrafish), this protein is Leucine-rich repeat and immunoglobulin-like domain-containing nogo receptor-interacting protein 1-B (lingo1b).